Here is a 214-residue protein sequence, read N- to C-terminus: MVSRYSAYRRGPDVISPDVIDRILVGACAAVWLVFTGVSVAAAVALMDLGRGFHEMAGNPHTTWVLYAVIVVSALVIVGAIPVLLRARRMAEAEPATRPTGASVRGGRSIGSGHPAKRAVAESAPVQHADAFEVAAEWSSEAVDRIWLRGTVVLTSAIGIALIAVAAATYLMAVGHDGPSWISYGLAGVVTAGMPVIEWLYARQLRRVVAPQSS.

Helical transmembrane passes span 23 to 43 (ILVG…VAAA) and 65 to 85 (VLYA…PVLL). The interval 96–115 (ATRPTGASVRGGRSIGSGHP) is disordered. The next 2 membrane-spanning stretches (helical) occupy residues 152 to 172 (VVLT…TYLM) and 181 to 201 (WISY…EWLY).

It localises to the cell membrane. This is an uncharacterized protein from Mycobacterium tuberculosis (strain CDC 1551 / Oshkosh).